Consider the following 85-residue polypeptide: MVVVRLARGGAKKRPFYNMVVADSRRHRDGKFIERVGFYNPRATGGEESLRIQMDRLNHWQSQGAQLSSTVSRLVKQFGRQQKPA.

It belongs to the bacterial ribosomal protein bS16 family.

The sequence is that of Small ribosomal subunit protein bS16 from Nitrosomonas eutropha (strain DSM 101675 / C91 / Nm57).